Here is a 574-residue protein sequence, read N- to C-terminus: Putative ABC transporter ATP-binding protein VV2_1533 (574 aa).

ABC transporter domains are found at residues 3–244 (IEFS…GIRE) and 299–533 (LDVR…ANLT). ATP is bound by residues 37–44 (GPSGSGKS) and 332–339 (GKNGSGKS).

This sequence belongs to the ABC transporter superfamily.

Its subcellular location is the cell inner membrane. In terms of biological role, probably part of an ABC transporter complex. Responsible for energy coupling to the transport system. The polypeptide is Putative ABC transporter ATP-binding protein VV2_1533 (Vibrio vulnificus (strain CMCP6)).